A 277-amino-acid polypeptide reads, in one-letter code: Urease accessory protein UreD (277 aa).

Belongs to the UreD family. In terms of assembly, ureD, UreF and UreG form a complex that acts as a GTP-hydrolysis-dependent molecular chaperone, activating the urease apoprotein by helping to assemble the nickel containing metallocenter of UreC. The UreE protein probably delivers the nickel.

The protein resides in the cytoplasm. Required for maturation of urease via the functional incorporation of the urease nickel metallocenter. In Flavobacterium johnsoniae (strain ATCC 17061 / DSM 2064 / JCM 8514 / BCRC 14874 / CCUG 350202 / NBRC 14942 / NCIMB 11054 / UW101) (Cytophaga johnsonae), this protein is Urease accessory protein UreD.